Consider the following 262-residue polypeptide: Aminoglycoside (3'') (9) adenylyltransferase (262 aa).

The adenylyltransferase domain stretch occupies residues 1–157; it reads MTLSIPPSIQ…ERAERLFTPA (157 aa). Residues S36, S46, and D47 each contribute to the ATP site. Residues D47, D49, and E87 each coordinate Mg(2+). The active-site Proton acceptor is the E87. Residue D130 coordinates ATP. The segment at 158–262 is helical domain; the sequence is PAAQLLKALR…AKAHIPTQFT (105 aa). Streptomycin-binding positions include 173–178 and H185; that span reads WQSTAD. Residues K205 and Y231 each coordinate ATP.

As to quaternary structure, monomer.

It carries out the reaction streptomycin + ATP = 3''-O-adenylylstreptomycin + diphosphate. It catalyses the reaction spectinomycin + ATP = 9-O-adenylylspectinomycin + diphosphate. Mediates bacterial resistance to the antibiotics streptomycin and spectinomycin, does not confer resistance to kanamycin. Binds ATP first, then antibiotic. In Salmonella typhimurium (strain LT2 / SGSC1412 / ATCC 700720), this protein is Aminoglycoside (3'') (9) adenylyltransferase (aadA).